Here is a 4010-residue protein sequence, read N- to C-terminus: Extracellular matrix organizing protein FRAS1 (4010 aa).

The N-terminal stretch at 1 to 25 (MGVLKAWLGVALALAEFAVLPNCEG) is a signal peptide. VWFC domains follow at residues 26 to 87 (ACLY…PQCA), 92 to 152 (GSCH…PICV), 156 to 216 (KPCS…SQCS), 218 to 278 (RSCS…EECA), and 282 to 342 (RSCS…PECI). The Extracellular segment spans residues 26-3903 (ACLYQGSFLA…AASLSQTGAS (3878 aa)). S343 carries the phosphoserine modification. Residues 358-416 (SSSAREIKHVPDGEKWEEGPCKLCECREAQVTCYEPSCPPCPVATLALVVKGQCCPDCT) form the VWFC 6 domain. FU repeat units lie at residues 408-459 (KGQC…GFYQ), 461-504 (GSLC…GFYQ), 506-552 (HHSC…GFYN), 554-598 (QGTC…GYYA), 601-646 (TGSC…GFYP), 648-704 (HGIC…HFYL), 707-752 (TGLC…THFN), 754-799 (EGTC…EQFL), 802-851 (VGYC…GHYK), 853-899 (RGTC…GHYL), 902-947 (NQVC…QYYL), 951-996 (TKTC…QHYR), 998-1041 (SGSC…GYFA), and 1045-1088 (KHRC…GFSG). The N-linked (GlcNAc...) asparagine glycan is linked to N727. Residues N1094 and N1107 are each glycosylated (N-linked (GlcNAc...) asparagine). CSPG repeat units lie at residues 1101–1196 (TPSL…LKIS), 1216–1307 (APYV…FQAN), 1328–1440 (ALRL…FQVS), 1465–1561 (APKL…FSFA), 1597–1691 (PAFQ…ISVT), 1712–1812 (GPRL…FSVS), and 1834–1938 (PPHI…FYVS). Residue N1506 is glycosylated (N-linked (GlcNAc...) asparagine). An N-linked (GlcNAc...) asparagine glycan is attached at N1779. 2 N-linked (GlcNAc...) asparagine glycosylation sites follow: N1950 and N1980. CSPG repeat units lie at residues 1959–2059 (EPPR…FSLT), 2080–2179 (IPHL…FDVV), 2201–2293 (PPVV…FVLS), 2313–2406 (ARPL…FTVS), and 2441–2538 (TPRI…FLVK). Calx-beta domains lie at 2545 to 2648 (VSDN…VGLS), 2661 to 2772 (AKVV…IALA), 2786 to 2892 (AKVL…VFLS), 2907 to 3009 (IAIN…VYLG), and 3027 to 3131 (ATVT…LVLG). N2565, N2666, and N2684 each carry an N-linked (GlcNAc...) asparagine glycan. N-linked (GlcNAc...) asparagine glycans are attached at residues N2910, N2987, N3072, N3220, N3678, and N3877. Residues 3904–3924 (IGSALAAIMLLLLLFLVACFV) form a helical membrane-spanning segment. Residues 3925–4010 (TRKCQKQKKK…HNNLQDGTEV (86 aa)) lie on the Cytoplasmic side of the membrane.

The protein belongs to the FRAS1 family.

The protein localises to the cell membrane. Its function is as follows. Involved in extracellular matrix organization. Required for the regulation of epidermal-basement membrane adhesion responsible for proper organogenesis during embryonic development. Involved in brain organization and function. This is Extracellular matrix organizing protein FRAS1 from Mus musculus (Mouse).